Consider the following 397-residue polypeptide: S-adenosylmethionine synthase (397 aa).

ATP is bound at residue His-16. Asp-18 lines the Mg(2+) pocket. K(+) is bound at residue Glu-44. Positions 57 and 100 each coordinate L-methionine. Residues 100–110 (QSPDIAQGVNE) are flexible loop. Residues 175–177 (DAK), 242–243 (RF), Asp-251, 257–258 (RK), Ala-274, and Lys-278 contribute to the ATP site. Asp-251 is an L-methionine binding site. An L-methionine-binding site is contributed by Lys-282.

This sequence belongs to the AdoMet synthase family. Homotetramer; dimer of dimers. Requires Mg(2+) as cofactor. It depends on K(+) as a cofactor.

The protein localises to the cytoplasm. The catalysed reaction is L-methionine + ATP + H2O = S-adenosyl-L-methionine + phosphate + diphosphate. Its pathway is amino-acid biosynthesis; S-adenosyl-L-methionine biosynthesis; S-adenosyl-L-methionine from L-methionine: step 1/1. Its function is as follows. Catalyzes the formation of S-adenosylmethionine (AdoMet) from methionine and ATP. The overall synthetic reaction is composed of two sequential steps, AdoMet formation and the subsequent tripolyphosphate hydrolysis which occurs prior to release of AdoMet from the enzyme. The chain is S-adenosylmethionine synthase from Streptococcus thermophilus (strain ATCC BAA-250 / LMG 18311).